A 434-amino-acid polypeptide reads, in one-letter code: Transcription initiation factor IIE subunit alpha (434 aa).

Residues 8-99 (VQRLIKMIMR…DFCSTIDSIK (92 aa)) form the HTH TFE/IIEalpha-type domain. Residues 124 to 151 (CPFCNKKFSSLDVLSLVTNEGTFACNVC) form a C4-type zinc finger. Disordered stretches follow at residues 217-251 (QQNL…EKRE), 357-408 (STDY…EMQE), and 415-434 (INGF…FEDV). A compositionally biased stretch (polar residues) spans 226-238 (DVRLSTSSPSITV). Basic and acidic residues-rich tracts occupy residues 241-251 (SADKETDEKRE) and 376-385 (IQNKRTKSIE). The span at 386–399 (ENNSLPPIVSTNGI) shows a compositional bias: polar residues. Over residues 419 to 434 (NEDDEDDEDEADFEDV) the composition is skewed to acidic residues.

This sequence belongs to the TFIIE alpha subunit family. TFIIE is a tetramer of two alpha (tfa1) and two beta (tfa2) subunits.

It is found in the nucleus. In terms of biological role, recruits TFIIH to the initiation complex and stimulates the RNA polymerase II C-terminal domain kinase and DNA-dependent ATPase activities of TFIIH. Both TFIIH and TFIIE are required for promoter clearance by RNA polymerase. In Schizosaccharomyces pombe (strain 972 / ATCC 24843) (Fission yeast), this protein is Transcription initiation factor IIE subunit alpha (tfa1).